Consider the following 203-residue polypeptide: ATP-dependent Clp protease proteolytic subunit (203 aa).

The active-site Nucleophile is the serine 103. Histidine 128 is a catalytic residue.

Belongs to the peptidase S14 family. In terms of assembly, fourteen ClpP subunits assemble into 2 heptameric rings which stack back to back to give a disk-like structure with a central cavity, resembling the structure of eukaryotic proteasomes.

Its subcellular location is the cytoplasm. The catalysed reaction is Hydrolysis of proteins to small peptides in the presence of ATP and magnesium. alpha-casein is the usual test substrate. In the absence of ATP, only oligopeptides shorter than five residues are hydrolyzed (such as succinyl-Leu-Tyr-|-NHMec, and Leu-Tyr-Leu-|-Tyr-Trp, in which cleavage of the -Tyr-|-Leu- and -Tyr-|-Trp bonds also occurs).. Cleaves peptides in various proteins in a process that requires ATP hydrolysis. Has a chymotrypsin-like activity. Plays a major role in the degradation of misfolded proteins. The chain is ATP-dependent Clp protease proteolytic subunit from Dichelobacter nodosus (strain VCS1703A).